The primary structure comprises 549 residues: Cation/acetate symporter ActP (549 aa).

Transmembrane regions (helical) follow at residues 33-53 (WQAIIMFLIFVVFTLGITYWA), 77-97 (LAIAGDYMSAASFLGISALVF), 103-123 (GLIYSLGFLVGWPIILFLIAE), 148-168 (ILSACGSLVVVALYLIAQMVG), 183-203 (IAVVLVGVLMMMYVLFGGMLA), 206-226 (WVQIIKAVLLLFGASFMAFMV), 262-282 (ISALSLGLGLMFGTAGLPHIL), 303-323 (GFMGYFYILTFIIGFGAIMLV), 355-375 (LFLGFISAVAFATILAVVAGL), 404-424 (VSKITVLILGVIAIILGMLFE), 428-448 (IAFMVGLAFAIAASCNFPIIL), 464-484 (GGWLGLITAVVLMILGPTIWV), and 493-513 (IFPYEYPALFSISVAFLGIWF).

The protein belongs to the sodium:solute symporter (SSF) (TC 2.A.21) family.

It is found in the cell inner membrane. Transports acetate. The chain is Cation/acetate symporter ActP from Shigella boydii serotype 4 (strain Sb227).